The sequence spans 512 residues: D-alanine--D-alanyl carrier protein ligase (512 aa).

ATP is bound at residue 152–153 (TS). Residue aspartate 199 participates in D-alanine binding. 294-299 (NAYGPT) serves as a coordination point for ATP. Residue valine 303 coordinates D-alanine. ATP contacts are provided by residues aspartate 385, 397 to 400 (YGGR), and lysine 499. Position 499 (lysine 499) interacts with D-alanine.

This sequence belongs to the ATP-dependent AMP-binding enzyme family. DltA subfamily.

It localises to the cytoplasm. It carries out the reaction holo-[D-alanyl-carrier protein] + D-alanine + ATP = D-alanyl-[D-alanyl-carrier protein] + AMP + diphosphate. The protein operates within cell wall biogenesis; lipoteichoic acid biosynthesis. Its function is as follows. Catalyzes the first step in the D-alanylation of lipoteichoic acid (LTA), the activation of D-alanine and its transfer onto the D-alanyl carrier protein (Dcp) DltC. In an ATP-dependent two-step reaction, forms a high energy D-alanyl-AMP intermediate, followed by transfer of the D-alanyl residue as a thiol ester to the phosphopantheinyl prosthetic group of the Dcp. D-alanylation of LTA plays an important role in modulating the properties of the cell wall in Gram-positive bacteria, influencing the net charge of the cell wall. This chain is D-alanine--D-alanyl carrier protein ligase, found in Streptococcus pyogenes serotype M3 (strain SSI-1).